A 125-amino-acid polypeptide reads, in one-letter code: Fumarate reductase subunit D (125 aa).

3 helical membrane passes run 30-50 (FAMI…LGVI), 63-83 (FATS…PMWH), and 105-125 (IACY…IFMI).

The protein belongs to the FrdD family. Part of an enzyme complex containing four subunits: a flavoprotein (FrdA), an iron-sulfur protein (FrdB), and two hydrophobic anchor proteins (FrdC and FrdD).

It localises to the cell inner membrane. In terms of biological role, anchors the catalytic components of the fumarate reductase complex to the cell membrane, binds quinones. The chain is Fumarate reductase subunit D from Vibrio campbellii (strain ATCC BAA-1116).